A 639-amino-acid polypeptide reads, in one-letter code: Homeobox protein 9 (639 aa).

Disordered stretches follow at residues 1–45, 66–144, 157–179, 262–313, 331–422, and 436–547; these read MLNS…DKQN, SPNH…DDNS, NQNQNQNQNQNQNQNQNQNQNQN, PRTL…SSGT, SESS…QTSN, and TNKN…NNEN. Residues 72–109 adopt a coiled-coil conformation; the sequence is ANNNNNNNNNNNNNNNNNNNNNNNNNNNNNNNNNNNIQ. Composition is skewed to low complexity over residues 73 to 119 and 126 to 142; these read NNNN…SNNN and GSLNSSNDNNFNSGNDD. Coiled-coil stretches lie at residues 152 to 184 and 230 to 296; these read SNQNQNQNQNQNQNQNQNQNQNQNQNQNQKDSW and EIEI…NINE. Residues 266–300 show a composition bias toward low complexity; it reads NNSSDSISENINNNNNNNNNNNNNNNNNINESNIN. Residues 345 to 354 show a composition bias toward basic and acidic residues; it reads QPRKVPRDLN. The span at 358 to 399 shows a compositional bias: low complexity; the sequence is NNNINYANNNNNNNNNNNNNNHNNNINNNNNNNNNNNNNSNN. Positions 365–396 form a coiled coil; sequence NNNNNNNNNNNNNNHNNNINNNNNNNNNNNNN. Residues 405–422 are compositionally biased toward polar residues; that stretch reads GSITNSVNIKPSKDQTSN. Over residues 436–526 the composition is skewed to low complexity; the sequence is TNKNNNNNNN…NNNLTSSSNN (91 aa). Polar residues predominate over residues 532–547; that stretch reads GNTSPNQSSANGNNEN. The segment at residues 559–621 is a DNA-binding region (homeobox); that stretch reads KRKKRGKLPG…NARRRILPRQ (63 aa).

The protein localises to the nucleus. Its function is as follows. Putative transcription factor. The polypeptide is Homeobox protein 9 (hbx9) (Dictyostelium discoideum (Social amoeba)).